The following is a 245-amino-acid chain: 1-(5-phosphoribosyl)-5-[(5-phosphoribosylamino)methylideneamino] imidazole-4-carboxamide isomerase (245 aa).

The Proton acceptor role is filled by Asp-8. The active-site Proton donor is Asp-130.

It belongs to the HisA/HisF family.

Its subcellular location is the cytoplasm. The catalysed reaction is 1-(5-phospho-beta-D-ribosyl)-5-[(5-phospho-beta-D-ribosylamino)methylideneamino]imidazole-4-carboxamide = 5-[(5-phospho-1-deoxy-D-ribulos-1-ylimino)methylamino]-1-(5-phospho-beta-D-ribosyl)imidazole-4-carboxamide. It participates in amino-acid biosynthesis; L-histidine biosynthesis; L-histidine from 5-phospho-alpha-D-ribose 1-diphosphate: step 4/9. This chain is 1-(5-phosphoribosyl)-5-[(5-phosphoribosylamino)methylideneamino] imidazole-4-carboxamide isomerase, found in Ectopseudomonas mendocina (strain ymp) (Pseudomonas mendocina).